Here is a 543-residue protein sequence, read N- to C-terminus: Glutamyl-tRNA(Gln) amidotransferase subunit A, chloroplastic/mitochondrial (543 aa).

Active-site charge relay system residues include lysine 121 and serine 196. Serine 220 serves as the catalytic Acyl-ester intermediate.

Belongs to the amidase family. GatA subfamily. As to quaternary structure, subunit of the heterotrimeric GatCAB amidotransferase (AdT) complex, composed of A, B and C subunits.

It localises to the mitochondrion. The protein localises to the plastid. The protein resides in the chloroplast stroma. The catalysed reaction is L-glutamyl-tRNA(Gln) + L-glutamine + ATP + H2O = L-glutaminyl-tRNA(Gln) + L-glutamate + ADP + phosphate + H(+). Allows the formation of correctly charged Gln-tRNA(Gln) through the transamidation of misacylated Glu-tRNA(Gln) in chloroplasts and mitochondria. The reaction takes place in the presence of glutamine and ATP through an activated gamma-phospho-Glu-tRNA(Gln). This chain is Glutamyl-tRNA(Gln) amidotransferase subunit A, chloroplastic/mitochondrial, found in Zea mays (Maize).